The sequence spans 496 residues: Glutelin type-A 3 (496 aa).

The first 24 residues, 1-24 (MATIKFPIVFSVVCLFLLCNGSLA), serve as a signal peptide directing secretion. Intrachain disulfides connect C45-C78 and C121-C312. Cupin type-1 domains follow at residues 50 to 248 (LQAF…GVAR) and 318 to 467 (QNID…EEAR).

The protein belongs to the 11S seed storage protein (globulins) family. In terms of assembly, hexamer; each subunit is composed of an acidic and a basic chain derived from a single precursor and linked by a disulfide bond.

Seed storage protein. The polypeptide is Glutelin type-A 3 (GLUA3) (Oryza sativa subsp. japonica (Rice)).